We begin with the raw amino-acid sequence, 217 residues long: Protein-L-isoaspartate O-methyltransferase (217 aa).

Ser65 is a catalytic residue.

The protein belongs to the methyltransferase superfamily. L-isoaspartyl/D-aspartyl protein methyltransferase family.

It is found in the cytoplasm. It catalyses the reaction [protein]-L-isoaspartate + S-adenosyl-L-methionine = [protein]-L-isoaspartate alpha-methyl ester + S-adenosyl-L-homocysteine. Catalyzes the methyl esterification of L-isoaspartyl residues in peptides and proteins that result from spontaneous decomposition of normal L-aspartyl and L-asparaginyl residues. It plays a role in the repair and/or degradation of damaged proteins. In Chlorobium limicola (strain DSM 245 / NBRC 103803 / 6330), this protein is Protein-L-isoaspartate O-methyltransferase.